Consider the following 185-residue polypeptide: MINEIKTDAKDRMTKSVDSLKSHMSKIRTGRAQPALLDGIMVEYYGSATPLRQVANVVAEDSRTLAVSVFDRSMIQAVEKAIMTSDLGLNPSSAGTTIRVPLPALTEERRKDLIKLVRAEAEQARVSVRNVRRDCNADLKALLKDKDISEDDDRRAQEEIQKLTDSFVKLVDDLLAAKEKELMEI.

This sequence belongs to the RRF family.

It is found in the cytoplasm. In terms of biological role, responsible for the release of ribosomes from messenger RNA at the termination of protein biosynthesis. May increase the efficiency of translation by recycling ribosomes from one round of translation to another. The polypeptide is Ribosome-recycling factor (Tolumonas auensis (strain DSM 9187 / NBRC 110442 / TA 4)).